A 121-amino-acid polypeptide reads, in one-letter code: UPF0344 protein BCE_1257 (121 aa).

A run of 4 helical transmembrane segments spans residues 6–26 (ITAW…YSAG), 38–58 (LMYI…VKTA), 65–85 (WYGL…MVLV), and 92–112 (PTGA…YLGL).

Belongs to the UPF0344 family.

The protein resides in the cell membrane. The protein is UPF0344 protein BCE_1257 of Bacillus cereus (strain ATCC 10987 / NRS 248).